A 425-amino-acid polypeptide reads, in one-letter code: Dihydroorotase (425 aa).

Zn(2+) contacts are provided by histidine 56 and histidine 58. Residues 58–60 and asparagine 90 each bind substrate; that span reads HYR. Zn(2+) is bound by residues aspartate 148, histidine 175, and histidine 228. Residue asparagine 274 coordinates substrate. Zn(2+) is bound at residue aspartate 301. Aspartate 301 is an active-site residue. Substrate-binding positions include histidine 305 and 319–320; that span reads FG.

The protein belongs to the metallo-dependent hydrolases superfamily. DHOase family. Class I DHOase subfamily. Zn(2+) is required as a cofactor.

The enzyme catalyses (S)-dihydroorotate + H2O = N-carbamoyl-L-aspartate + H(+). Its pathway is pyrimidine metabolism; UMP biosynthesis via de novo pathway; (S)-dihydroorotate from bicarbonate: step 3/3. Catalyzes the reversible cyclization of carbamoyl aspartate to dihydroorotate. The sequence is that of Dihydroorotase from Lactobacillus delbrueckii subsp. bulgaricus (strain ATCC 11842 / DSM 20081 / BCRC 10696 / JCM 1002 / NBRC 13953 / NCIMB 11778 / NCTC 12712 / WDCM 00102 / Lb 14).